We begin with the raw amino-acid sequence, 298 residues long: Tyrosine recombinase XerC (298 aa).

A Core-binding (CB) domain is found at 2 to 88 (TDLHTDVERY…ALRSFFDWLV (87 aa)). The Tyr recombinase domain maps to 109–288 (HLPKNIDVDD…DFQHLASVYD (180 aa)). Catalysis depends on residues R148, K172, H240, R243, and H266. The active-site O-(3'-phospho-DNA)-tyrosine intermediate is Y275.

The protein belongs to the 'phage' integrase family. XerC subfamily. Forms a cyclic heterotetrameric complex composed of two molecules of XerC and two molecules of XerD, in which XerC interacts with XerD via its C-terminal region, XerD interacts with XerC via its C-terminal region and so on.

It is found in the cytoplasm. With respect to regulation, ftsK may regulate the catalytic switch between XerC and XerD in the heterotetrameric complex during the two steps of the recombination process. Site-specific tyrosine recombinase, which acts by catalyzing the cutting and rejoining of the recombining DNA molecules. Binds cooperatively to specific DNA consensus sequences that are separated from XerD binding sites by a short central region, forming the heterotetrameric XerC-XerD complex that recombines DNA substrates. The complex is essential to convert dimers of the bacterial chromosome into monomers to permit their segregation at cell division. It also contributes to the segregational stability of plasmids. In the complex XerC specifically exchanges the top DNA strands. This chain is Tyrosine recombinase XerC, found in Shigella dysenteriae serotype 1 (strain Sd197).